Here is a 498-residue protein sequence, read N- to C-terminus: Ribose import ATP-binding protein RbsA (498 aa).

ABC transporter domains follow at residues 2–237 and 247–491; these read LALQ…VGRD and VTPG…TGQQ. 34 to 41 provides a ligand contact to ATP; that stretch reads GENGAGKS.

Belongs to the ABC transporter superfamily. Ribose importer (TC 3.A.1.2.1) family. In terms of assembly, the complex is composed of an ATP-binding protein (RbsA), two transmembrane proteins (RbsC) and a solute-binding protein (RbsB).

It localises to the cell membrane. The enzyme catalyses D-ribose(out) + ATP + H2O = D-ribose(in) + ADP + phosphate + H(+). Functionally, part of the ABC transporter complex RbsABC involved in ribose import. Responsible for energy coupling to the transport system. This Deinococcus geothermalis (strain DSM 11300 / CIP 105573 / AG-3a) protein is Ribose import ATP-binding protein RbsA.